Here is a 199-residue protein sequence, read N- to C-terminus: Probable GTP-binding protein EngB (199 aa).

In terms of domain architecture, EngB-type G spans 25–199; it reads IGMEVAFVGY…LKRVLNNWLR (175 aa). S40 and T62 together coordinate Mg(2+).

It belongs to the TRAFAC class TrmE-Era-EngA-EngB-Septin-like GTPase superfamily. EngB GTPase family. The cofactor is Mg(2+).

Necessary for normal cell division and for the maintenance of normal septation. This chain is Probable GTP-binding protein EngB, found in Blochmanniella pennsylvanica (strain BPEN).